We begin with the raw amino-acid sequence, 491 residues long: NADH-quinone oxidoreductase subunit N 1 (491 aa).

14 helical membrane-spanning segments follow: residues 9–29 (IAAP…LDLL), 38–58 (PMYV…VPLW), 76–96 (FAAV…LLSF), 104–124 (SGYL…GGAG), 126–146 (LMVI…MIAF), 161–181 (FVLG…IYGA), 211–231 (VGVG…PFHI), 246–266 (AFMA…LLVA), 276–296 (FLLP…TVGI), 304–324 (LMAY…PGLG), 329–349 (SAAA…FAVV), 375–395 (VGVC…TGGF), 410–432 (AWIV…LKVI), and 461–481 (VVLA…GPVS).

Belongs to the complex I subunit 2 family. NDH-1 is composed of 14 different subunits. Subunits NuoA, H, J, K, L, M, N constitute the membrane sector of the complex.

It localises to the cell membrane. The enzyme catalyses a quinone + NADH + 5 H(+)(in) = a quinol + NAD(+) + 4 H(+)(out). NDH-1 shuttles electrons from NADH, via FMN and iron-sulfur (Fe-S) centers, to quinones in the respiratory chain. The immediate electron acceptor for the enzyme in this species is believed to be a menaquinone. Couples the redox reaction to proton translocation (for every two electrons transferred, four hydrogen ions are translocated across the cytoplasmic membrane), and thus conserves the redox energy in a proton gradient. This is NADH-quinone oxidoreductase subunit N 1 from Symbiobacterium thermophilum (strain DSM 24528 / JCM 14929 / IAM 14863 / T).